Reading from the N-terminus, the 311-residue chain is Probable dihydroorotate dehydrogenase A (fumarate) (311 aa).

Residues Ser-20 and 44 to 45 (KT) each bind FMN. Residues Lys-44, 68–72 (NSMGL), and Asn-127 contribute to the substrate site. An FMN-binding site is contributed by Asn-127. Cys-130 serves as the catalytic Nucleophile. FMN contacts are provided by Lys-164 and Ile-192. A substrate-binding site is contributed by 193 to 194 (NS). FMN-binding positions include Gly-221, 249–250 (GG), and 271–272 (GT).

It belongs to the dihydroorotate dehydrogenase family. Type 1 subfamily. As to quaternary structure, homodimer. The cofactor is FMN.

Its subcellular location is the cytoplasm. It catalyses the reaction (S)-dihydroorotate + fumarate = orotate + succinate. It functions in the pathway pyrimidine metabolism; UMP biosynthesis via de novo pathway. Catalyzes the conversion of dihydroorotate to orotate with fumarate as the electron acceptor. This Enterococcus faecalis (strain ATCC 700802 / V583) protein is Probable dihydroorotate dehydrogenase A (fumarate) (pyrDA).